We begin with the raw amino-acid sequence, 237 residues long: Ribonuclease PH (237 aa).

Residues R86 and 124–126 (GTR) contribute to the phosphate site.

This sequence belongs to the RNase PH family. Homohexameric ring arranged as a trimer of dimers.

The catalysed reaction is tRNA(n+1) + phosphate = tRNA(n) + a ribonucleoside 5'-diphosphate. In terms of biological role, phosphorolytic 3'-5' exoribonuclease that plays an important role in tRNA 3'-end maturation. Removes nucleotide residues following the 3'-CCA terminus of tRNAs; can also add nucleotides to the ends of RNA molecules by using nucleoside diphosphates as substrates, but this may not be physiologically important. Probably plays a role in initiation of 16S rRNA degradation (leading to ribosome degradation) during starvation. This is Ribonuclease PH from Methylorubrum extorquens (strain CM4 / NCIMB 13688) (Methylobacterium extorquens).